The sequence spans 315 residues: Deoxyribonuclease-1-like 1 (315 aa).

Residues 1-29 (MDSSGGFQKHTCGHALLLLLLLLAGGAEA) form the signal peptide. Catalysis depends on residues Glu-108 and His-159. A disulfide bridge connects residues Cys-198 and Cys-235. Residue Asn-272 is glycosylated (N-linked (GlcNAc...) asparagine).

Belongs to the DNase I family.

It is found in the endoplasmic reticulum. The chain is Deoxyribonuclease-1-like 1 (DNASE1L1) from Sus scrofa (Pig).